The primary structure comprises 72 residues: Prokaryotic ubiquitin-like protein Pup (72 aa).

Gly residues predominate over residues Met1–Gln10. Positions Met1–Asp45 are disordered. Positions Gly9–Glu60 form a coiled coil. The segment at Gln28–Phe66 is ARC ATPase binding. Over residues Glu31–Asp42 the composition is skewed to basic and acidic residues. An Isoglutamyl lysine isopeptide (Glu-Lys) (interchain with K-? in acceptor proteins) cross-link involves residue Glu72.

Belongs to the prokaryotic ubiquitin-like protein family. As to quaternary structure, strongly interacts with the proteasome-associated ATPase ARC through a hydrophobic interface; the interacting region of Pup lies in its C-terminal half. There is one Pup binding site per ARC hexamer ring.

It functions in the pathway protein degradation; proteasomal Pup-dependent pathway. Functionally, protein modifier that is covalently attached to lysine residues of substrate proteins, thereby targeting them for proteasomal degradation. The tagging system is termed pupylation. In Streptomyces avermitilis (strain ATCC 31267 / DSM 46492 / JCM 5070 / NBRC 14893 / NCIMB 12804 / NRRL 8165 / MA-4680), this protein is Prokaryotic ubiquitin-like protein Pup.